Reading from the N-terminus, the 110-residue chain is MALTKADMVERLFSELGLNKRDAKELVDQFFEVIKASLESGRSVKLSGFGNFDLRDKRQRPGRNPKTGEEIPITARRVVTFKAGQKLKATVEALQEPELGKLDAERTGEV.

The protein belongs to the bacterial histone-like protein family. As to quaternary structure, heterodimer of an alpha and a beta chain.

In terms of biological role, this protein is one of the two subunits of integration host factor, a specific DNA-binding protein that functions in genetic recombination as well as in transcriptional and translational control. In Methylococcus capsulatus (strain ATCC 33009 / NCIMB 11132 / Bath), this protein is Integration host factor subunit alpha.